The following is a 364-amino-acid chain: Fructose-bisphosphate aldolase B (364 aa).

At alanine 2 the chain carries N-acetylalanine. Lysine 13 carries the post-translational modification N6-succinyllysine. Serine 36 is modified (phosphoserine). Threonine 39 bears the Phosphothreonine mark. Arginine 43 contributes to the beta-D-fructose 1,6-bisphosphate binding site. Threonine 119 bears the Phosphothreonine mark. The residue at position 121 (lysine 121) is an N6-succinyllysine. The residue at position 132 (serine 132) is a Phosphoserine. Residue glutamate 188 is the Proton acceptor of the active site. Lysine 230 functions as the Schiff-base intermediate with dihydroxyacetone-P in the catalytic mechanism. Phosphoserine occurs at positions 272, 276, 299, and 301. 272–274 (SGG) lines the beta-D-fructose 1,6-bisphosphate pocket. Residue arginine 304 coordinates beta-D-fructose 1,6-bisphosphate. Serine 309 carries the phosphoserine modification. Residue lysine 317 is modified to N6-succinyllysine.

It belongs to the class I fructose-bisphosphate aldolase family. As to quaternary structure, homotetramer. Interacts with BBS1, BBS2, BBS4 and BBS7. Forms a ternary complex with G6PD and TP53; this interaction is direct.

Its subcellular location is the cytoplasm. The protein localises to the cytosol. It localises to the cytoskeleton. It is found in the microtubule organizing center. The protein resides in the centrosome. Its subcellular location is the centriolar satellite. It catalyses the reaction beta-D-fructose 1,6-bisphosphate = D-glyceraldehyde 3-phosphate + dihydroxyacetone phosphate. It carries out the reaction beta-D-fructose 1-phosphate = D-glyceraldehyde + dihydroxyacetone phosphate. Its pathway is carbohydrate degradation; glycolysis; D-glyceraldehyde 3-phosphate and glycerone phosphate from D-glucose: step 4/4. It participates in carbohydrate biosynthesis; gluconeogenesis. The protein operates within carbohydrate metabolism; fructose metabolism. Functionally, catalyzes the aldol cleavage of fructose 1,6-biphosphate to form two triosephosphates dihydroxyacetone phosphate and D-glyceraldehyde 3-phosphate in glycolysis as well as the reverse stereospecific aldol addition reaction in gluconeogenesis. In fructolysis, metabolizes fructose 1-phosphate derived from the phosphorylation of dietary fructose by fructokinase into dihydroxyacetone phosphate and D-glyceraldehyde. Acts as an adapter independently of its enzymatic activity, exerts a tumor suppressor role by stabilizing the ternary complex with G6PD and TP53 to inhibit G6PD activity and keep oxidative pentose phosphate metabolism in check. The protein is Fructose-bisphosphate aldolase B (ALDOB) of Ovis aries (Sheep).